The primary structure comprises 292 residues: ATP synthase gamma chain (292 aa).

It belongs to the ATPase gamma chain family. F-type ATPases have 2 components, CF(1) - the catalytic core - and CF(0) - the membrane proton channel. CF(1) has five subunits: alpha(3), beta(3), gamma(1), delta(1), epsilon(1). CF(0) has three main subunits: a, b and c.

It localises to the cell inner membrane. Functionally, produces ATP from ADP in the presence of a proton gradient across the membrane. The gamma chain is believed to be important in regulating ATPase activity and the flow of protons through the CF(0) complex. The sequence is that of ATP synthase gamma chain from Brucella ovis (strain ATCC 25840 / 63/290 / NCTC 10512).